The sequence spans 1105 residues: Ran-binding protein 6 (1105 aa).

A2 carries the N-acetylalanine modification. HEAT repeat units follow at residues 219–257 (FKDFADLLPGILQAVNDSCYQDDDSVLESLVEIADTVPK), 361–399 (KVVLPMTKEHIMQMLQSPDWKCRHAGLMALSAIGEGCHQ), 402–440 (EPILDETVNSVLLFLQDPHPRVRAAACTTLGQMATDFAP), 444–483 (KKFHEIVITALLRTMENQGNQRVQSHAASALVIFIEDCPK), 866–905 (LPWFEQLLPLIVNLICSSRPWPDRQWGLCIFDDIIEHCSP), 908–946 (FKYVEYFRWPMLLNMRDNNPEVRQAAAYGLGVMAQFGGD), and 949–987 (RSLCSEAVPLLVKVIKCANSKTKKNVIATENCISAIGKI).

The protein belongs to the importin beta family.

It is found in the cytoplasm. The protein localises to the nucleus. Its function is as follows. May function in nuclear protein import as nuclear transport receptor. In Mus musculus (Mouse), this protein is Ran-binding protein 6 (Ranbp6).